A 748-amino-acid polypeptide reads, in one-letter code: Methylmalonyl-CoA mutase, mitochondrial (748 aa).

Residues 1 to 30 (MLRAKNQLFLLSPHYLKQLNIPSASRWKRL) constitute a mitochondrion transit peptide. Glutamine 48 is a binding site for malonyl-CoA. The residue at position 87 (lysine 87) is an N6-acetyllysine. Malonyl-CoA-binding positions include 94 to 97 (YPTM) and 104 to 108 (TIRQY). The residue at position 210 (lysine 210) is an N6-acetyllysine. Residues 214 to 216 (TIQ), arginine 226, lysine 253, histidine 263, and 302 to 304 (RLS) contribute to the malonyl-CoA site. Lysine 333 carries the N6-acetyllysine modification. Lysine 341 bears the N6-succinyllysine mark. Residue serine 479 is modified to Phosphoserine. Lysine 593 bears the N6-succinyllysine mark. Lysine 600 carries the N6-acetyllysine modification. The B12-binding domain occupies 612 to 744 (RPRLLVAKMG…DDIEKCLAEK (133 aa)). Histidine 625 lines the adenosylcob(III)alamin pocket.

It belongs to the methylmalonyl-CoA mutase family. In terms of assembly, homodimer. Interacts (the apoenzyme form) with MMAA; the interaction is GTP dependent. It depends on adenosylcob(III)alamin as a cofactor.

It localises to the mitochondrion matrix. The protein resides in the mitochondrion. Its subcellular location is the cytoplasm. The enzyme catalyses (R)-methylmalonyl-CoA = succinyl-CoA. Inhibited by itaconyl-CoA, a metabolite that inactivates the coenzyme B12 cofactor. In terms of biological role, catalyzes the reversible isomerization of methylmalonyl-CoA (MMCoA) (generated from branched-chain amino acid metabolism and degradation of dietary odd chain fatty acids and cholesterol) to succinyl-CoA (3-carboxypropionyl-CoA), a key intermediate of the tricarboxylic acid cycle. The chain is Methylmalonyl-CoA mutase, mitochondrial (Mmut) from Mus musculus (Mouse).